The following is a 132-amino-acid chain: Small ribosomal subunit protein uS8 (132 aa).

Belongs to the universal ribosomal protein uS8 family. Part of the 30S ribosomal subunit. Contacts proteins S5 and S12.

Its function is as follows. One of the primary rRNA binding proteins, it binds directly to 16S rRNA central domain where it helps coordinate assembly of the platform of the 30S subunit. The protein is Small ribosomal subunit protein uS8 of Xanthobacter autotrophicus (strain ATCC BAA-1158 / Py2).